A 536-amino-acid chain; its full sequence is Phosphoenolpyruvate carboxykinase (ATP) (536 aa).

Substrate contacts are provided by R61, Y195, and K201. ATP is bound by residues K201, H220, and 236-244 (GLSGTGKTT). Residues K201 and H220 each coordinate Mn(2+). Mn(2+) is bound at residue D257. Residues E285, R322, and T447 each contribute to the ATP site. R322 contacts substrate.

Belongs to the phosphoenolpyruvate carboxykinase (ATP) family. Requires Mn(2+) as cofactor.

It is found in the cytoplasm. The enzyme catalyses oxaloacetate + ATP = phosphoenolpyruvate + ADP + CO2. The protein operates within carbohydrate biosynthesis; gluconeogenesis. Its function is as follows. Involved in the gluconeogenesis. Catalyzes the conversion of oxaloacetate (OAA) to phosphoenolpyruvate (PEP) through direct phosphoryl transfer between the nucleoside triphosphate and OAA. The sequence is that of Phosphoenolpyruvate carboxykinase (ATP) from Rhizobium leguminosarum bv. trifolii (strain WSM2304).